Here is an 859-residue protein sequence, read N- to C-terminus: Bifunctional levopimaradiene synthase, chloroplastic (859 aa).

The transit peptide at 1–52 (MALLSSSLSSHIPTGAHHLTLNAYANTQCIPHFFSTLNAGTSAGKRSSLYLR) directs the protein to the chloroplast. Residues D392, D394, D611, D615, N755, and E763 each contribute to the Mg(2+) site. Residues 392–395 (DIDD) carry the DXDD motif motif. The DDXXD motif motif lies at 611–615 (DDLYD).

It belongs to the terpene synthase family. Tpsd subfamily. It depends on Mg(2+) as a cofactor. The cofactor is Mn(2+).

It localises to the plastid. The protein localises to the chloroplast. It catalyses the reaction (+)-copalyl diphosphate = abieta-8(14),12-diene + diphosphate. The catalysed reaction is (+)-copalyl diphosphate = abieta-7,13-diene + diphosphate. It functions in the pathway secondary metabolite biosynthesis; terpenoid biosynthesis. It participates in terpene metabolism; oleoresin biosynthesis. In terms of biological role, terpene synthase (di-TPS) involved in the biosynthesis of diterpene natural products included in conifer oleoresin secretions and volatile emissions; these compounds contribute to biotic and abiotic stress defense against herbivores and pathogens. Catalyzes the conversion of (+)-copalyl diphosphate ((+)-CPP) to isopimaradiene. The protein is Bifunctional levopimaradiene synthase, chloroplastic of Picea sitchensis (Sitka spruce).